We begin with the raw amino-acid sequence, 488 residues long: Germacrene A hydroxylase (488 aa).

A helical; Signal-anchor for type II membrane protein membrane pass occupies residues 7–23 (TSIALATILFFVYKFAT). N-linked (GlcNAc...) asparagine glycosylation is found at Asn169, Asn260, Asn379, and Asn410. A heme-binding site is contributed by Cys432.

The protein belongs to the cytochrome P450 family. Expressed in floral glandular trichomes.

The protein localises to the endoplasmic reticulum membrane. It carries out the reaction (+)-(R)-germacrene A + 3 reduced [NADPH--hemoprotein reductase] + 3 O2 = germacra-1(10),4,11(13)-trien-12-oate + 3 oxidized [NADPH--hemoprotein reductase] + 4 H2O + 4 H(+). The protein operates within secondary metabolite biosynthesis; terpenoid biosynthesis. Its function is as follows. Involved in the biosynthesis of germacrene-derived sesquiterpene lactones. Component of the parthenolide biosynthetic pathway; parthenolide and conjugates are promising anti-cancer drugs highly active against colon cancer cells. Catalyzes three consecutive oxidations of germacrene A to produce germacrene A acid. This Tanacetum parthenium (Feverfew) protein is Germacrene A hydroxylase.